A 336-amino-acid chain; its full sequence is MSALNKKSFLTWLKEGGIYVVLLVLLAIIIFQDPTFLSLLNLSNILTQSSVRIIIALGVAGLIVTQGTDLSAGRQVGLAAVVAATLLQSMENANKVFPEMATMPIALVILIVCAIGAVIGLVNGIIIAYLNVTPFITTLGTMIIVYGINSLYYDFVGASPISGFDSGFSTFAQGFVAMGSFRLSYITFYALIAVAFVWVLWNKTRFGKNIFAIGGNPEAAKVSGVNVALNLLMIYALSGVFYAFGGLLEAGRIGSATNNLGFMYELDAIAACVVGGVSFSGGVGTVFGVVTGVIIFTVINYGLTYIGVNPYWQYIIKGGIIIFAVALDSLKYARKK.

9 helical membrane passes run 17 to 37, 53 to 73, 107 to 127, 128 to 148, 181 to 201, 227 to 247, 257 to 277, 279 to 299, and 306 to 326; these read GIYVVLLVLLAIIIFQDPTFL, IIIALGVAGLIVTQGTDLSAG, LVILIVCAIGAVIGLVNGIII, AYLNVTPFITTLGTMIIVYGI, FRLSYITFYALIAVAFVWVLW, VALNLLMIYALSGVFYAFGGL, TNNLGFMYELDAIAACVVGGV, FSGGVGTVFGVVTGVIIFTVI, and IGVNPYWQYIIKGGIIIFAVA.

It belongs to the binding-protein-dependent transport system permease family. AraH/RbsC subfamily. As to quaternary structure, the complex is composed of one ATP-binding protein (MglA), two transmembrane proteins (MglC) and a solute-binding protein (MglB).

The protein localises to the cell inner membrane. In terms of biological role, part of the ABC transporter complex MglABC involved in galactose/methyl galactoside import. Probably responsible for the translocation of the substrate across the membrane. This is Galactose/methyl galactoside import permease protein MglC (mglC) from Salmonella typhimurium (strain LT2 / SGSC1412 / ATCC 700720).